A 103-amino-acid chain; its full sequence is Large ribosomal subunit protein bL21 (103 aa).

Belongs to the bacterial ribosomal protein bL21 family. Part of the 50S ribosomal subunit. Contacts protein L20.

In terms of biological role, this protein binds to 23S rRNA in the presence of protein L20. The chain is Large ribosomal subunit protein bL21 from Parvibaculum lavamentivorans (strain DS-1 / DSM 13023 / NCIMB 13966).